The sequence spans 295 residues: MELLSALSLGELALSFSRVPLFPVFDLSYFIVSILYLKYEPGAVELSRRHPVASWLCAMLHCFGSYILADLLLGEPLIDYFSNNSSILLASAVWYLIFFCPLDLFYKCVCFLPVKLIFVAMKEVVRVRKIAVGIHHAHHHYHHGWFIMIATGWVKGSGVALLSNVEQLLRGVWKPETNEILHMSFPTKASLYGAILFTLQQTRWLPVSKASLIFIFTMFMVSCKVFLTATHSHSSPFDVLEAYVCPVLFGTGSGGDHPQDNHGAWPGGPPSGALATKSKEELSEGSRKKKTKKAD.

At 1–18 the chain is on the lumenal side; that stretch reads MELLSALSLGELALSFSR. Residues 19-39 traverse the membrane as a helical segment; that stretch reads VPLFPVFDLSYFIVSILYLKY. The Cytoplasmic segment spans residues 40–51; that stretch reads EPGAVELSRRHP. Residues 52–72 traverse the membrane as a helical segment; it reads VASWLCAMLHCFGSYILADLL. Residues 73–85 are Lumenal-facing; sequence LGEPLIDYFSNNS. Glycine 74 serves as a coordination point for Ca(2+). The helical transmembrane segment at 86 to 106 threads the bilayer; the sequence is SILLASAVWYLIFFCPLDLFY. Residues 107 to 144 lie on the Cytoplasmic side of the membrane; sequence KCVCFLPVKLIFVAMKEVVRVRKIAVGIHHAHHHYHHG. A 1,2-diacyl-sn-glycero-3-phospho-(1D-myo-inositol-4,5-bisphosphate) contacts are provided by lysine 122 and arginine 126. Residues 145 to 165 traverse the membrane as a helical segment; that stretch reads WFIMIATGWVKGSGVALLSNV. Topologically, residues 166 to 178 are lumenal; sequence EQLLRGVWKPETN. The helical transmembrane segment at 179–199 threads the bilayer; it reads EILHMSFPTKASLYGAILFTL. The Cytoplasmic segment spans residues 200–209; it reads QQTRWLPVSK. The chain crosses the membrane as a helical span at residues 210 to 230; sequence ASLIFIFTMFMVSCKVFLTAT. The Lumenal portion of the chain corresponds to 231 to 234; that stretch reads HSHS. A helical transmembrane segment spans residues 235 to 255; that stretch reads SPFDVLEAYVCPVLFGTGSGG. The Cytoplasmic segment spans residues 256-295; sequence DHPQDNHGAWPGGPPSGALATKSKEELSEGSRKKKTKKAD. The interval 256 to 295 is disordered; it reads DHPQDNHGAWPGGPPSGALATKSKEELSEGSRKKKTKKAD. A compositionally biased stretch (basic and acidic residues) spans 277 to 286; it reads KSKEELSEGS.

It belongs to the TMEM38 family. In terms of assembly, homotrimer; conformation seems to be controled by binding to diacylglycerol (DAG).

The protein localises to the sarcoplasmic reticulum membrane. Its subcellular location is the nucleus membrane. The catalysed reaction is K(+)(in) = K(+)(out). With respect to regulation, channel activity is activated by a change of voltage within the sarcoplasmic reticulum lumen and blocked by luminal high Ca(2+) levels. Functionally, intracellular monovalent cation channel required for maintenance of rapid intracellular calcium release. Acts as a potassium counter-ion channel that functions in synchronization with calcium release from intracellular stores. Opened by a change of voltage within the sarcoplasmic reticulum lumen. This is Trimeric intracellular cation channel type A from Oryctolagus cuniculus (Rabbit).